The chain runs to 380 residues: Peroxisomal membrane protein PEX13 (380 aa).

The segment at 1-30 (MSDSSAPDLPSKPSSLNAGQSSSLQTTNTG) is disordered. The Lumenal portion of the chain corresponds to 1-230 (MSDSSAPDLP…NKNTNKLSLK (230 aa)). Positions 12 to 30 (KPSSLNAGQSSSLQTTNTG) are enriched in polar residues. Residues 231–251 (PLLLFLAAVVGFPYLLKKLIA) traverse the membrane as a helical segment. The Cytoplasmic portion of the chain corresponds to 252–380 (HLAETSQMNG…DSTEFQKMKT (129 aa)). The SH3 domain maps to 277-344 (TKLEFARALY…PYNYVEIIER (68 aa)).

Belongs to the peroxin-13 family. In terms of assembly, interacts (via SH3 domain) with PEX14 (via SH3-binding motif); forming the PEX13-PEX14 docking complex.

The protein resides in the peroxisome membrane. In terms of biological role, component of the PEX13-PEX14 docking complex, a translocon channel that specifically mediates the import of peroxisomal cargo proteins bound to PEX5 receptor. The PEX13-PEX14 docking complex forms a large import pore which can be opened to a diameter of about 9 nm. Mechanistically, PEX5 receptor along with cargo proteins associates with the PEX14 subunit of the PEX13-PEX14 docking complex in the cytosol, leading to the insertion of the receptor into the organelle membrane with the concomitant translocation of the cargo into the peroxisome matrix. In Komagataella pastoris (Yeast), this protein is Peroxisomal membrane protein PEX13 (PEX13).